The chain runs to 261 residues: uncharacterized protein (261 aa).

Residues Ile-33, Asp-78, and Asn-105 each contribute to the NADP(+) site. Residue Ser-157 is the Proton donor of the active site. Residues Tyr-172, Lys-176, and Ser-206 each coordinate NADP(+). Tyr-172 (proton acceptor) is an active-site residue. Lys-176 acts as the Lowers pKa of active site Tyr in catalysis.

The protein belongs to the short-chain dehydrogenases/reductases (SDR) family.

It localises to the cytoplasm. It is found in the nucleus. This is an uncharacterized protein from Schizosaccharomyces pombe (strain 972 / ATCC 24843) (Fission yeast).